Here is a 293-residue protein sequence, read N- to C-terminus: uncharacterized protein (293 aa).

7 helical membrane passes run 55 to 75, 77 to 97, 110 to 130, 138 to 158, 164 to 184, 193 to 213, and 226 to 246; these read FLLC…VFLC, TGFM…LLHG, PGLL…ASAC, FSGL…GLAG, WQVI…ALYL, LFLG…VFDT, and LLTL…LILF. The N-linked (GlcNAc...) asparagine; by host glycan is linked to asparagine 287.

It belongs to the cytomegalovirus US12 family.

Its subcellular location is the membrane. This is an uncharacterized protein from Human cytomegalovirus (strain AD169) (HHV-5).